Here is a 75-residue protein sequence, read N- to C-terminus: MFTMKKSLLFLFFLGTISLSFCEGERSADEDDEGEMTEEEKRSIRDKGKTIAIDLAKSAGTGVLKTLMCKLDKSC.

Positions 1–24 (MFTMKKSLLFLFFLGTISLSFCEG) are cleaved as a signal peptide. The propeptide occupies 25–40 (ERSADEDDEGEMTEEE).

In terms of tissue distribution, expressed by the skin glands.

It is found in the secreted. Functionally, has antimicrobial activity against Gram-positive bacteria S.aureus ATCC 2592 (MIC=10.0 uM), S.aureus ATCC 43300 (MIC=10.0 uM) and B.subtilis (MIC=30.0 uM), against Gram-negative bacteria E.coli ML-35P (MIC=10.0 uM), P.aeruginosa PA01 (MIC=2.5 uM) and P.aeruginosa ATCC 27853 (MIC=2.5 uM) and against fungus C.albicans ATCC 2002 (MIC=10.0 uM). The protein is Rugosin-LK2 of Limnonectes kuhlii (Kuhl's Creek frog).